We begin with the raw amino-acid sequence, 155 residues long: SsrA-binding protein (155 aa).

A disordered region spans residues 132–155 (DKREDLKQKQMKRDVDRAIKDHMR).

The protein belongs to the SmpB family.

It localises to the cytoplasm. Required for rescue of stalled ribosomes mediated by trans-translation. Binds to transfer-messenger RNA (tmRNA), required for stable association of tmRNA with ribosomes. tmRNA and SmpB together mimic tRNA shape, replacing the anticodon stem-loop with SmpB. tmRNA is encoded by the ssrA gene; the 2 termini fold to resemble tRNA(Ala) and it encodes a 'tag peptide', a short internal open reading frame. During trans-translation Ala-aminoacylated tmRNA acts like a tRNA, entering the A-site of stalled ribosomes, displacing the stalled mRNA. The ribosome then switches to translate the ORF on the tmRNA; the nascent peptide is terminated with the 'tag peptide' encoded by the tmRNA and targeted for degradation. The ribosome is freed to recommence translation, which seems to be the essential function of trans-translation. The protein is SsrA-binding protein of Oceanobacillus iheyensis (strain DSM 14371 / CIP 107618 / JCM 11309 / KCTC 3954 / HTE831).